A 92-amino-acid polypeptide reads, in one-letter code: Probable glutathione transferase (92 aa).

The region spanning 1–71 (RTCPYAQRAR…YLEEAFPDPP (71 aa)) is the GST N-terminal domain. Residue C3 is the Nucleophile of the active site. Residues K30, V43, and 55-56 (ES) each bind glutathione.

It belongs to the GST superfamily. Omega family.

It catalyses the reaction RX + glutathione = an S-substituted glutathione + a halide anion + H(+). It carries out the reaction L-dehydroascorbate + 2 glutathione = glutathione disulfide + L-ascorbate. The enzyme catalyses methylarsonate + 2 glutathione + H(+) = methylarsonous acid + glutathione disulfide + H2O. In terms of biological role, exhibits glutathione-dependent thiol transferase activity. Has dehydroascorbate reductase activity and may contribute to the recycling of ascorbic acid. Participates in the biotransformation of inorganic arsenic and reduces monomethylarsonic acid (MMA). The polypeptide is Probable glutathione transferase (Aplysia californica (California sea hare)).